Reading from the N-terminus, the 368-residue chain is Protein-glutamate methylesterase/protein-glutamine glutaminase (368 aa).

A Response regulatory domain is found at 9 to 126 (KVLVVDDSAF…SINMKELKDE (118 aa)). A 4-aspartylphosphate modification is found at aspartate 60. A CheB-type methylesterase domain is found at 161–354 (SVPARIAVAI…ETVVKAVEII (194 aa)). Catalysis depends on residues serine 173, histidine 200, and aspartate 296.

It belongs to the CheB family. Post-translationally, phosphorylated by CheA. Phosphorylation of the N-terminal regulatory domain activates the methylesterase activity.

Its subcellular location is the cytoplasm. It catalyses the reaction [protein]-L-glutamate 5-O-methyl ester + H2O = L-glutamyl-[protein] + methanol + H(+). It carries out the reaction L-glutaminyl-[protein] + H2O = L-glutamyl-[protein] + NH4(+). Functionally, involved in chemotaxis. Part of a chemotaxis signal transduction system that modulates chemotaxis in response to various stimuli. Catalyzes the demethylation of specific methylglutamate residues introduced into the chemoreceptors (methyl-accepting chemotaxis proteins or MCP) by CheR. Also mediates the irreversible deamidation of specific glutamine residues to glutamic acid. In Pyrococcus horikoshii (strain ATCC 700860 / DSM 12428 / JCM 9974 / NBRC 100139 / OT-3), this protein is Protein-glutamate methylesterase/protein-glutamine glutaminase.